Consider the following 140-residue polypeptide: Cystatin-C (140 aa).

The N-terminal stretch at 1–20 (MASPLRSLLFLLAVLAVAWA) is a signal peptide. A Secondary area of contact motif is present at residues 75–79 (QLVAG). Cystine bridges form between Cys-93–Cys-103 and Cys-117–Cys-137.

It belongs to the cystatin family.

The protein localises to the secreted. As an inhibitor of cysteine proteinases, this protein is thought to serve an important physiological role as a local regulator of this enzyme activity. The protein is Cystatin-C (Cst3) of Mus musculus (Mouse).